A 329-amino-acid polypeptide reads, in one-letter code: Lipoyl synthase (329 aa).

Positions 55, 60, 66, 81, 85, 88, and 292 each coordinate [4Fe-4S] cluster. A Radical SAM core domain is found at Trp67–Leu281.

This sequence belongs to the radical SAM superfamily. Lipoyl synthase family. [4Fe-4S] cluster serves as cofactor.

It is found in the cytoplasm. It catalyses the reaction [[Fe-S] cluster scaffold protein carrying a second [4Fe-4S](2+) cluster] + N(6)-octanoyl-L-lysyl-[protein] + 2 oxidized [2Fe-2S]-[ferredoxin] + 2 S-adenosyl-L-methionine + 4 H(+) = [[Fe-S] cluster scaffold protein] + N(6)-[(R)-dihydrolipoyl]-L-lysyl-[protein] + 4 Fe(3+) + 2 hydrogen sulfide + 2 5'-deoxyadenosine + 2 L-methionine + 2 reduced [2Fe-2S]-[ferredoxin]. It participates in protein modification; protein lipoylation via endogenous pathway; protein N(6)-(lipoyl)lysine from octanoyl-[acyl-carrier-protein]: step 2/2. In terms of biological role, catalyzes the radical-mediated insertion of two sulfur atoms into the C-6 and C-8 positions of the octanoyl moiety bound to the lipoyl domains of lipoate-dependent enzymes, thereby converting the octanoylated domains into lipoylated derivatives. This chain is Lipoyl synthase, found in Leifsonia xyli subsp. xyli (strain CTCB07).